Here is a 531-residue protein sequence, read N- to C-terminus: Protein SIS2 (531 aa).

Basic and acidic residues predominate over residues 1-20; the sequence is MPSDKDIKSPAQPKKEEEIP. 5 disordered regions span residues 1-42, 88-127, 139-168, 180-261, and 461-531; these read MPSD…ANII, SPDS…KSPS, RPVR…EPSS, SLRA…DPRL, and YPED…TTNL. A compositionally biased stretch (polar residues) spans 155 to 168; it reads LTPITSPQHSEPSS. The segment covering 183 to 198 has biased composition (low complexity); it reads ATTNSISSAAASNQST. The segment covering 204–213 has biased composition (gly residues); sequence SGGGGGGGGA. Residues 214–249 are compositionally biased toward low complexity; it reads NTATSSNSTTSNTALAAQGTTTTTTTTNSNSNTTTT. Acidic residues-rich tracts occupy residues 462-472 and 481-514; these read PEDEDEDEADD and AIID…EEDP.

This sequence belongs to the HFCD (homooligomeric flavin containing Cys decarboxylase) superfamily.

The protein localises to the nucleus. It localises to the cytoplasm. May stimulate expression of certain genes that are periodically expressed during late G1. Also modulates the expression of the ENA1 ATPase. This chain is Protein SIS2 (SIS2), found in Candida tropicalis (Yeast).